A 343-amino-acid chain; its full sequence is Glyceraldehyde-3-phosphate dehydrogenase (343 aa).

NAD(+) is bound by residues 13–14 and glycine 111; that span reads TI. D-glyceraldehyde 3-phosphate is bound at residue 140-142; the sequence is SCN. Residue cysteine 141 is the Nucleophile of the active site. Position 169 (arginine 169) interacts with NAD(+). 195-196 serves as a coordination point for D-glyceraldehyde 3-phosphate; that stretch reads HA. Glutamine 303 lines the NAD(+) pocket.

Belongs to the glyceraldehyde-3-phosphate dehydrogenase family. As to quaternary structure, homotetramer.

It is found in the cytoplasm. It catalyses the reaction D-glyceraldehyde 3-phosphate + phosphate + NADP(+) = (2R)-3-phospho-glyceroyl phosphate + NADPH + H(+). The enzyme catalyses D-glyceraldehyde 3-phosphate + phosphate + NAD(+) = (2R)-3-phospho-glyceroyl phosphate + NADH + H(+). It participates in carbohydrate degradation; glycolysis; pyruvate from D-glyceraldehyde 3-phosphate: step 1/5. The polypeptide is Glyceraldehyde-3-phosphate dehydrogenase (Sulfurisphaera tokodaii (strain DSM 16993 / JCM 10545 / NBRC 100140 / 7) (Sulfolobus tokodaii)).